A 145-amino-acid chain; its full sequence is Brain and acute leukemia cytoplasmic protein (145 aa).

Gly-2 carries the N-myristoyl glycine lipid modification. Cys-3 is lipidated: S-palmitoyl cysteine. The interval 3 to 35 (CGGSRADAIEPRYYESWTRETESTWLTYTDSDA) is interaction with CAMK2A. The tract at residues 36–113 (LPSAAATDSG…GLWTTEAKRD (78 aa)) is disordered. Over residues 83–106 (CGTQCPNSQSLSSGPLTQKQNGLW) the composition is skewed to polar residues.

In terms of assembly, interacts with CAMK2A. In terms of processing, palmitoylation and myristoylation target the protein to the lipid rafts. As to expression, predominantly expressed in the brain (at protein level). Within the brain, found in most of forebrain structures, including the cerebral cortex, hippocampal formation, olfactory bulb, anterior olfactory nuclei, piriform cortex, tenia tecta and amygdaloid nuclei. Not detected in glial cells.

The protein localises to the cytoplasm. It localises to the synapse. It is found in the synaptosome. The protein resides in the membrane raft. Its subcellular location is the postsynaptic density. Its function is as follows. May play a synaptic role at the postsynaptic lipid rafts possibly through interaction with CAMK2A. The protein is Brain and acute leukemia cytoplasmic protein (Baalc) of Rattus norvegicus (Rat).